A 347-amino-acid chain; its full sequence is Olfactory receptor 2M2 (347 aa).

Residues 1 to 25 (MAWENQTFNSDFILLGIFNHSPPHT) are Extracellular-facing. N-linked (GlcNAc...) asparagine glycosylation is present at Asn-5. A helical membrane pass occupies residues 26–49 (FLFFLVLGIFLVAFMGNSVMVLLI). Residues 50 to 57 (YLDTQLHT) lie on the Cytoplasmic side of the membrane. A helical transmembrane segment spans residues 58 to 79 (PMYFLLSQLSLMDLMLICTTVP). Topologically, residues 80 to 100 (KMAFNYLSGSKSISMAGCVTQ) are extracellular. Cys-97 and Cys-189 are oxidised to a cystine. A helical membrane pass occupies residues 101–120 (IFFYISLSGSECFLLAVMAY). Residues 121–139 (DRYIAICHPLRYTNLMNPK) are Cytoplasmic-facing. A helical membrane pass occupies residues 140–158 (ICGLMATFSWILGSTDGII). Residues 159 to 195 (DAVATFSFSFCGSREIAHFFCEFPSLLILSCNDTSIF) lie on the Extracellular side of the membrane. Residue Asn-190 is glycosylated (N-linked (GlcNAc...) asparagine). A helical transmembrane segment spans residues 196 to 219 (EEVIFICCIVMLVFPVAIIIASYA). Residues 220-236 (RVILAVIHMGSGEGRCK) lie on the Cytoplasmic side of the membrane. The chain crosses the membrane as a helical span at residues 237–259 (AFTTCSSHLMVVGMYYGAALFMY). At 260 to 272 (IRPTSDHSPTQDK) the chain is on the extracellular side. Residues 273 to 292 (MVSVFYTILTPMLNPLIYSL) form a helical membrane-spanning segment. Residues 293–347 (RNKEVTRAFMKILGKGKSESELPHKLYVLLFAKFFFLISIFFYDVKILALIMYIA) lie on the Cytoplasmic side of the membrane.

The protein belongs to the G-protein coupled receptor 1 family.

It is found in the cell membrane. Functionally, odorant receptor. The sequence is that of Olfactory receptor 2M2 (OR2M2) from Homo sapiens (Human).